We begin with the raw amino-acid sequence, 272 residues long: MFDLTGKHVCYVADCGGIALETSKVLMTKNIAKLAILQSTENPQAIAQLQSIKPSTQIFFWTYDVTMAREEMKKYFDEVMVQMDYIDVLINGATLCDENNIDATINTNLTGMMNTVATVLPYMDRKMGGSGGLIVNVTSVIGLDPSPVFCAYSASKFGVIGFTRSLADPLYYSQNGVAVMAVCCGPTRVFVDRELKAFLEYGQSFADRLRRAPCQSTSVCGQNIVNAIERSENGQIWIADKGGLELVKLHWYWHMADQFVHYMQSNDEEDQD.

11-34 (YVADCGGIALETSKVLMTKNIAKL) is an NAD(+) binding site. S139 serves as a coordination point for substrate. Catalysis depends on Y152, which acts as the Proton acceptor.

This sequence belongs to the short-chain dehydrogenases/reductases (SDR) family.

The protein is Alcohol dehydrogenase-related 31 kDa protein (Adhr) of Drosophila mauritiana (Fruit fly).